A 407-amino-acid polypeptide reads, in one-letter code: Tryptophan 2,3-dioxygenase B (407 aa).

Residues 71 to 75 (FIVTH) and arginine 143 contribute to the substrate site. Histidine 327 is a binding site for heme. Substrate is bound at residue threonine 341.

Belongs to the tryptophan 2,3-dioxygenase family. As to quaternary structure, homotetramer. Dimer of dimers. Requires heme as cofactor.

It catalyses the reaction L-tryptophan + O2 = N-formyl-L-kynurenine. Its pathway is amino-acid degradation; L-tryptophan degradation via kynurenine pathway; L-kynurenine from L-tryptophan: step 1/2. Functionally, heme-dependent dioxygenase that catalyzes the oxidative cleavage of the L-tryptophan (L-Trp) pyrrole ring and converts L-tryptophan to N-formyl-L-kynurenine. Catalyzes the oxidative cleavage of the indole moiety. This Danio rerio (Zebrafish) protein is Tryptophan 2,3-dioxygenase B.